Here is a 341-residue protein sequence, read N- to C-terminus: D-aspartate oxidase (341 aa).

Residues Asp-36, Lys-37, Thr-43, Ser-44, Met-50, Gly-307, Ile-311, and Ser-312 each contribute to the FAD site. Residues 339–341 carry the Microbody targeting signal motif; that stretch reads SNL.

Belongs to the DAMOX/DASOX family. Monomer. Interacts with PEX5; the interaction is direct and required for localization of DDO to the peroxisome. Interacts with DAOA; the interaction is direct and increases the degradation rate of DDO. It depends on FAD as a cofactor. In terms of processing, may be S-nitrosylated. Expressed in epithelial cells of the proximal nephron tubules in the renal cortex (at protein level). In the brain, expressed in the frontal, temporal, and occipital lobes of the cortex, hippocampus, striatum, diencephalon, brainstem, cerebellum, spinal cord, plexus choroiderus and ependyma (at protein level). Expression is increased in the prefrontal cortex of schizophrenic patients. Levels are normal in the superior frontal gyrus of patients with Alzheimer's disease.

Its subcellular location is the peroxisome matrix. It localises to the cytoplasm. The protein resides in the cytosol. The enzyme catalyses D-aspartate + O2 + H2O = oxaloacetate + H2O2 + NH4(+). It catalyses the reaction D-glutamate + O2 + H2O = H2O2 + 2-oxoglutarate + NH4(+). Its activity is regulated as follows. Inhibited by the benzodiazepine olanzapine. Inhibited by aminooxyacetic acid, thiolactomycin, malonate and meso-tartrate. Clozapine, haloperidol and chlorpromazine have no effect on activity. Not inhibited by sodium, potassium, magnesium, iron, calcium, cobalt, copper, nickel, manganese or zinc ions. Not inhibited by AMP, ADP, ATP, or cAMP. Not inhibited by pyridoxal 5'-phosphate. Selectively catalyzes the oxidative deamination of acidic amino acids. Suppresses the level of D-aspartate in the brain, an amino acid that can act as an agonist for glutamate receptors. Protects the organism from the toxicity of D-amino acids. May also function in the intestine. This chain is D-aspartate oxidase (DDO), found in Homo sapiens (Human).